The chain runs to 359 residues: Aminomethyltransferase (359 aa).

This sequence belongs to the GcvT family. The glycine cleavage system is composed of four proteins: P, T, L and H.

The enzyme catalyses N(6)-[(R)-S(8)-aminomethyldihydrolipoyl]-L-lysyl-[protein] + (6S)-5,6,7,8-tetrahydrofolate = N(6)-[(R)-dihydrolipoyl]-L-lysyl-[protein] + (6R)-5,10-methylene-5,6,7,8-tetrahydrofolate + NH4(+). Functionally, the glycine cleavage system catalyzes the degradation of glycine. The sequence is that of Aminomethyltransferase from Idiomarina loihiensis (strain ATCC BAA-735 / DSM 15497 / L2-TR).